We begin with the raw amino-acid sequence, 421 residues long: Serine hydroxymethyltransferase (421 aa).

Residues Leu-121 and 125–127 (GHL) each bind (6S)-5,6,7,8-tetrahydrofolate. The residue at position 229 (Lys-229) is an N6-(pyridoxal phosphate)lysine.

This sequence belongs to the SHMT family. As to quaternary structure, homodimer. Requires pyridoxal 5'-phosphate as cofactor.

It is found in the cytoplasm. The enzyme catalyses (6R)-5,10-methylene-5,6,7,8-tetrahydrofolate + glycine + H2O = (6S)-5,6,7,8-tetrahydrofolate + L-serine. It functions in the pathway one-carbon metabolism; tetrahydrofolate interconversion. Its pathway is amino-acid biosynthesis; glycine biosynthesis; glycine from L-serine: step 1/1. Its function is as follows. Catalyzes the reversible interconversion of serine and glycine with tetrahydrofolate (THF) serving as the one-carbon carrier. This reaction serves as the major source of one-carbon groups required for the biosynthesis of purines, thymidylate, methionine, and other important biomolecules. Also exhibits THF-independent aldolase activity toward beta-hydroxyamino acids, producing glycine and aldehydes, via a retro-aldol mechanism. This Haemophilus influenzae (strain PittGG) protein is Serine hydroxymethyltransferase.